A 525-amino-acid chain; its full sequence is Bifunctional purine biosynthesis protein PurH (525 aa).

Residues M1–V148 enclose the MGS-like domain.

It belongs to the PurH family.

It catalyses the reaction (6R)-10-formyltetrahydrofolate + 5-amino-1-(5-phospho-beta-D-ribosyl)imidazole-4-carboxamide = 5-formamido-1-(5-phospho-D-ribosyl)imidazole-4-carboxamide + (6S)-5,6,7,8-tetrahydrofolate. The catalysed reaction is IMP + H2O = 5-formamido-1-(5-phospho-D-ribosyl)imidazole-4-carboxamide. Its pathway is purine metabolism; IMP biosynthesis via de novo pathway; 5-formamido-1-(5-phospho-D-ribosyl)imidazole-4-carboxamide from 5-amino-1-(5-phospho-D-ribosyl)imidazole-4-carboxamide (10-formyl THF route): step 1/1. The protein operates within purine metabolism; IMP biosynthesis via de novo pathway; IMP from 5-formamido-1-(5-phospho-D-ribosyl)imidazole-4-carboxamide: step 1/1. The chain is Bifunctional purine biosynthesis protein PurH from Buchnera aphidicola subsp. Acyrthosiphon pisum (strain 5A).